The primary structure comprises 381 residues: UDP-4-amino-4-deoxy-L-arabinose--oxoglutarate aminotransferase (381 aa).

An N6-(pyridoxal phosphate)lysine modification is found at Lys-182.

Belongs to the DegT/DnrJ/EryC1 family. ArnB subfamily. As to quaternary structure, homodimer. It depends on pyridoxal 5'-phosphate as a cofactor.

It catalyses the reaction UDP-4-amino-4-deoxy-beta-L-arabinose + 2-oxoglutarate = UDP-beta-L-threo-pentopyranos-4-ulose + L-glutamate. It functions in the pathway nucleotide-sugar biosynthesis; UDP-4-deoxy-4-formamido-beta-L-arabinose biosynthesis; UDP-4-deoxy-4-formamido-beta-L-arabinose from UDP-alpha-D-glucuronate: step 2/3. It participates in bacterial outer membrane biogenesis; lipopolysaccharide biosynthesis. In terms of biological role, catalyzes the conversion of UDP-4-keto-arabinose (UDP-Ara4O) to UDP-4-amino-4-deoxy-L-arabinose (UDP-L-Ara4N). The modified arabinose is attached to lipid A and is required for resistance to polymyxin and cationic antimicrobial peptides. The protein is UDP-4-amino-4-deoxy-L-arabinose--oxoglutarate aminotransferase of Photorhabdus laumondii subsp. laumondii (strain DSM 15139 / CIP 105565 / TT01) (Photorhabdus luminescens subsp. laumondii).